Consider the following 107-residue polypeptide: Putative ATP synthase subunit f, mitochondrial (107 aa).

The protein belongs to the ATPase F chain family. F-type ATPases have 2 components, CF(1) - the catalytic core - and CF(0) - the membrane proton channel. CF(0) seems to have nine subunits: a, b, c, d, e, f, g, F6 and 8 (or A6L).

It is found in the mitochondrion membrane. Its function is as follows. Mitochondrial membrane ATP synthase (F(1)F(0) ATP synthase or Complex V) produces ATP from ADP in the presence of a proton gradient across the membrane which is generated by electron transport complexes of the respiratory chain. F-type ATPases consist of two structural domains, F(1) - containing the extramembraneous catalytic core and F(0) - containing the membrane proton channel, linked together by a central stalk and a peripheral stalk. During catalysis, ATP synthesis in the catalytic domain of F(1) is coupled via a rotary mechanism of the central stalk subunits to proton translocation. Part of the complex F(0) domain. Minor subunit located with subunit a in the membrane. This Drosophila melanogaster (Fruit fly) protein is Putative ATP synthase subunit f, mitochondrial.